The following is a 467-amino-acid chain: Cytochrome P450 monooxygenase azaI (467 aa).

A signal peptide spans 1–28 (MESLAQLPGIFLPLAGCVLALSLSALLA). Cys-411 serves as a coordination point for heme.

This sequence belongs to the cytochrome P450 family. Heme serves as cofactor.

It participates in secondary metabolite biosynthesis. In terms of biological role, cytochrome P450 monooxygenase; part of the gene cluster that mediates the biosynthesis of azaphilones, a class of fungal metabolites characterized by a highly oxygenated pyrano-quinone bicyclic core and exhibiting a broad range of bioactivities. In the first step, the non-reducing polyketide synthase azaA forms the hexaketide precursor from successive condensations of five malonyl-CoA units, presumably with a simple acetyl-CoA starter unit. The reactive polyketide chain then undergoes a PT-mediated C2-C7 cyclization to afford the aromatic ring and is eventually released as an aldehyde through the R-domain. The putative ketoreductase azaE is proposed to catalyze the reduction of the terminal ketone resulting in the early culture product FK17-P2a. The monooxygenase azaH was demonstrated to be the only enzyme required to convert FK17-P2a to azanigerone E. AzaH first hydroxylates the benzaldehyde intermediate FK17-P2a at C4, which triggers the formation of the pyran-ring to afford azanigerone E. In parallel, the 2,4-dimethylhexanoyl chain is synthesized by the HR-PKS azaB and is proposed to be transferred to the C4-hydroxyl of azanigerone E by the acyltransferase azaD directly from the ACP domain of azaB. Alternatively, the 2,4-dimethyl-hexanoyl chain may be offloaded from the HR-PKS as a carboxylic acid and converted to an acyl-CoA by azaF. The resulting acyl-CoA molecule could then be taken up as a substrate by AzaD to form azanigerone B. To yield the carboxylic acid substituent in azanigerone A, the hydroxypropyl side chain of azanigerone B would need to undergo a C-C oxidative cleavage catalyzed by cytochrome P450 AzaI. AzaI is proposed to act on a vicinal diol that leads to a C-C bond scission either through an alkoxyradical intermediate or a peroxy complex. In the biosynthesis of azanigerone A, azanigerone B first undergoes hydroxylation at C10, possibly catalyzed by one of the two FAD-dependent monooxygenases encoded in the cluster, azaG or azaL, resulting in the vicinal diol azanigerone C. Oxidative cleavage of azanigerone C by azaI would yield the corresponding aldehyde derivative of azanigerone A. Finally, the dehydrogenase azaJ is proposed to convert the aldehyde functional group into the carboxylic acid, completing the conversion from azanigerone B to azanigerone A. Alternatively, the oxidation of aldehyde to carboxylic acid may be catalyzed by the same P450 enzyme azaI via consecutive oxidation or by endogenous alcohol dehydrogenase. The sequence is that of Cytochrome P450 monooxygenase azaI from Aspergillus niger (strain ATCC 1015 / CBS 113.46 / FGSC A1144 / LSHB Ac4 / NCTC 3858a / NRRL 328 / USDA 3528.7).